Reading from the N-terminus, the 419-residue chain is Putative trans-acting enoyl reductase MT2525 (419 aa).

Residue Lys-127 forms an Isoglutamyl lysine isopeptide (Lys-Gln) (interchain with Q-Cter in protein Pup) linkage. The tract at residues 197–232 (NDPDARRQLSDPYMLSPDRGAEPELGPQPDLPSRRG) is disordered. A helical membrane pass occupies residues 284 to 304 (VLAPVVSVVGGGVGNAMFGLA).

The protein belongs to the saccharopine dehydrogenase family. Enoyl reductase subfamily.

The protein resides in the cell membrane. This chain is Putative trans-acting enoyl reductase MT2525, found in Mycobacterium tuberculosis (strain CDC 1551 / Oshkosh).